The chain runs to 148 residues: Cytochrome c oxidase subunit 6, mitochondrial (148 aa).

A mitochondrion-targeting transit peptide spans 1–40; it reads MLSRAIFRNPVINRTLLRARPGAYHATRLTKNTFIQSRKY.

Belongs to the cytochrome c oxidase subunit 5A family. In terms of assembly, component of the cytochrome c oxidase (complex IV, CIV), a multisubunit enzyme composed of 12 subunits. The complex is composed of a catalytic core of 3 subunits COX1, COX2 and COX3, encoded in the mitochondrial DNA, and 9 supernumerary subunits COX4, COX5A (or COX5B), COX6, COX7, COX8, COX9, COX12, COX13 and COX26, which are encoded in the nuclear genome. The complex exists as a monomer or a dimer and forms supercomplexes (SCs) in the inner mitochondrial membrane with a dimer of ubiquinol-cytochrome c oxidoreductase (cytochrome b-c1 complex, complex III, CIII), resulting in 2 different assemblies (supercomplexes III(2)IV and III(2)IV(2)). COX26 interacts with COX1, COX2, COX6 and COX9.

It localises to the mitochondrion inner membrane. The protein operates within energy metabolism; oxidative phosphorylation. Its function is as follows. Component of the cytochrome c oxidase, the last enzyme in the mitochondrial electron transport chain which drives oxidative phosphorylation. The respiratory chain contains 3 multisubunit complexes succinate dehydrogenase (complex II, CII), ubiquinol-cytochrome c oxidoreductase (cytochrome b-c1 complex, complex III, CIII) and cytochrome c oxidase (complex IV, CIV), that cooperate to transfer electrons derived from NADH and succinate to molecular oxygen, creating an electrochemical gradient over the inner membrane that drives transmembrane transport and the ATP synthase. Cytochrome c oxidase is the component of the respiratory chain that catalyzes the reduction of oxygen to water. Electrons originating from reduced cytochrome c in the intermembrane space (IMS) are transferred via the dinuclear copper A center (CU(A)) of COX2 and heme A of COX1 to the active site in COX1, a binuclear center (BNC) formed by heme A3 and copper B (CU(B)). The BNC reduces molecular oxygen to 2 water molecules using 4 electrons from cytochrome c in the IMS and 4 protons from the mitochondrial matrix. COX6 may stabilize the region of CIV at the interface with CIII, supporting a role in formation or stability of the CIII(2)IV(2) SC. This is Cytochrome c oxidase subunit 6, mitochondrial (COX6) from Saccharomyces cerevisiae (strain ATCC 204508 / S288c) (Baker's yeast).